The primary structure comprises 461 residues: pre-mRNA splicing regulator USH1G (461 aa).

3 ANK repeats span residues Asp31 to Lys60, Trp64 to Cys93, and Asp97 to Ser126. Disordered regions lie at residues Gly208 to Ser243 and Glu332 to Cys368. The span at Ala210 to Arg222 shows a compositional bias: basic residues. Residues Leu385–Arg447 enclose the SAM domain. Residue Ser422 is modified to Phosphoserine; by CK2.

As to quaternary structure, part of a complex composed of USH1C, USH1G and MYO7A. Interacts with USH1C (via the first PDZ domain). Interacts with PDZD7. Interacts with CDH23 and PCDH15; these interactions may recruit USH1G to the plasma membrane. Interacts with intraflagellar transport proteins IFT20, IFT52 and IFT57. Interacts with splicing factors SF3B1, PRPF6, PRPF31 and SON. Interacts with the U4/U6.U5 tri-small nuclear ribonucleoprotein (tri-snRNP) complex in the presence of pre-mRNAs. Interacts (via SAM domain) with MAGI2 (via PDZ 6 domain); the interaction is triggered by phosphorylation of USH1G by CK2 and negatively regulates MAGI2-mediated endocytosis. Expressed in vestibule of the inner ear, eye and small intestine.

It is found in the cytoplasm. It localises to the cytosol. Its subcellular location is the cytoskeleton. The protein resides in the cell membrane. The protein localises to the cell projection. It is found in the cilium. It localises to the nucleus speckle. Its subcellular location is the nucleus. The protein resides in the cajal body. The protein localises to the microtubule organizing center. It is found in the centrosome. It localises to the photoreceptor inner segment. Plays a role in pre-mRNA splicing by regulating the release and transfer of U4/U6.U5 tri-small nuclear ribonucleoprotein (tri-snRNP) complexes from their assembly site in Cajal bodies to nuclear speckles, thereby contributing to the assembly of the pre-catalytic spliceosome on target pre-mRNAs. May also participate in recycling of snRNPs back to Cajal bodies during splicing. Plays a role in regulating MAGI2-mediated endocytosis. Anchoring/scaffolding protein that is a part of the functional network formed by USH1C, USH1G, CDH23 and MYO7A that mediates mechanotransduction in cochlear hair cells. Required for normal development and maintenance of cochlear hair cell bundles. Required for normal hearing. This chain is pre-mRNA splicing regulator USH1G (USH1G), found in Homo sapiens (Human).